Consider the following 52-residue polypeptide: MFGFIYRDPSPAPQGKIRDGSKDPKTPGGGGGGGGGISPNGGAPLGGKGFSM.

The segment at 1 to 52 is disordered; sequence MFGFIYRDPSPAPQGKIRDGSKDPKTPGGGGGGGGGISPNGGAPLGGKGFSM. Positions 16–25 are enriched in basic and acidic residues; the sequence is KIRDGSKDPK. The span at 27-52 shows a compositional bias: gly residues; sequence PGGGGGGGGGISPNGGAPLGGKGFSM.

This is an uncharacterized protein from Dictyostelium discoideum (Social amoeba).